A 66-amino-acid polypeptide reads, in one-letter code: Type 3 secretion system chaperone YscE (66 aa).

This sequence belongs to the YscE family. As to quaternary structure, component of the heterodimeric YscE-YscG chaperone. The YscE-YscG chaperone forms a stable ternary complex with YscF/SctF.

The protein localises to the cytoplasm. In terms of biological role, chaperone of the type III secretion system (T3SS), also called injectisome, which is used to inject bacterial effector proteins into eukaryotic host cells. Along with YscG, prevents premature polymerization of the YscF/SctF needle protein within the cytoplasm. Required for Yop secretion. The sequence is that of Type 3 secretion system chaperone YscE from Yersinia enterocolitica.